Reading from the N-terminus, the 479-residue chain is PTS system MurNAc-GlcNAc-specific EIIBC component (479 aa).

The 83-residue stretch at 5–87 folds into the PTS EIIB type-1 domain; the sequence is QILAEHIIDA…SELSGAPLGE (83 aa). Catalysis depends on Cys27, which acts as the Phosphocysteine intermediate; for EIIB activity. Positions 125 to 479 constitute a PTS EIIC type-1 domain; sequence KTIANIFIPL…AMRESDTLGD (355 aa). 10 helical membrane passes run 130 to 150, 169 to 189, 195 to 215, 229 to 249, 269 to 289, 303 to 323, 344 to 364, 379 to 399, 403 to 423, and 445 to 465; these read IFIP…IAAV, VTVF…FTGI, FGAT…TGLT, LQPG…LSII, ITLF…AGFV, IGGV…VMLG, LLPI…ALWV, ALPV…TLPL, FITA…IGHI, and LGYI…TYFF.

The protein resides in the cell membrane. The enzyme catalyses N-acetyl-beta-D-muramate-(1-&gt;4)-N-acetyl-D-glucosamine(out) + N(pros)-phospho-L-histidyl-[protein] = 6-phospho-N-acetyl-beta-D-muramate-(1-&gt;4)-N-acetyl-D-glucosamine(in) + L-histidyl-[protein]. Its pathway is cell wall biogenesis; peptidoglycan recycling. Functionally, the phosphoenolpyruvate-dependent sugar phosphotransferase system (sugar PTS), a major carbohydrate active transport system, catalyzes the phosphorylation of incoming sugar substrates concomitantly with their translocation across the cell membrane. This system is involved in the uptake and phosphorylation of MurNAc-GlcNAc, the principle peptidoglycan turnover product of S.aureus, yielding cytoplasmic MurNAc 6P-GlcNAc. This Staphylococcus saprophyticus subsp. saprophyticus (strain ATCC 15305 / DSM 20229 / NCIMB 8711 / NCTC 7292 / S-41) protein is PTS system MurNAc-GlcNAc-specific EIIBC component.